Consider the following 84-residue polypeptide: RNA-binding protein Hfq (84 aa).

The 61-residue stretch at Asp-11–Val-71 folds into the Sm domain.

It belongs to the Hfq family. Homohexamer.

Its function is as follows. RNA chaperone that binds small regulatory RNA (sRNAs) and mRNAs to facilitate mRNA translational regulation in response to envelope stress, environmental stress and changes in metabolite concentrations. Also binds with high specificity to tRNAs. The protein is RNA-binding protein Hfq of Methylorubrum populi (strain ATCC BAA-705 / NCIMB 13946 / BJ001) (Methylobacterium populi).